Consider the following 131-residue polypeptide: Protein NEGATIVE REGULATOR OF RESISTANCE (131 aa).

Disordered regions lie at residues 1 to 33 and 51 to 131; these read MDATTTDATTAKRKRPAASDIADDAPTTVDEVS and TRRL…RAPA. The Nuclear localization signal signature appears at 12–15; it reads KRKR. Residues 116-131 show a composition bias toward low complexity; it reads PPSDAPATPRSARAPA.

Belongs to the NPR1-interactor family. In terms of assembly, interacts with NPR1/NH1. Interacts with NPR2/NH2.

It localises to the nucleus. Acts as a negative regulator of disease resistance. Acts on basal resistance, age-related resistance and resistance mediated by the LRR receptor kinase XA21. Plants over-expressing NRR display enhanced susceptibility to the bacterial blight Xanthomonas oryzae pv. oryzae (Xoo). The chain is Protein NEGATIVE REGULATOR OF RESISTANCE from Oryza sativa subsp. indica (Rice).